Consider the following 252-residue polypeptide: 5-oxoprolinase subunit A (252 aa).

It belongs to the LamB/PxpA family. In terms of assembly, forms a complex composed of PxpA, PxpB and PxpC.

The catalysed reaction is 5-oxo-L-proline + ATP + 2 H2O = L-glutamate + ADP + phosphate + H(+). Functionally, catalyzes the cleavage of 5-oxoproline to form L-glutamate coupled to the hydrolysis of ATP to ADP and inorganic phosphate. The polypeptide is 5-oxoprolinase subunit A (Mycolicibacterium gilvum (strain PYR-GCK) (Mycobacterium gilvum (strain PYR-GCK))).